Reading from the N-terminus, the 502-residue chain is Cytochrome P450 71A1 (502 aa).

A helical membrane pass occupies residues 7 to 21 (LLFLAIALTFFLLKL). Cysteine 443 provides a ligand contact to heme.

This sequence belongs to the cytochrome P450 family. It depends on heme as a cofactor. Mesocarp.

The protein localises to the microsome membrane. The protein resides in the endoplasmic reticulum membrane. In terms of biological role, involved in the metabolism of compounds associated with the development of flavor in the ripening fruit process, possibly by acting as trans-cinnamic acid 4-hydrolase. This is Cytochrome P450 71A1 (CYP71A1) from Persea americana (Avocado).